The sequence spans 91 residues: MDKVKKPVLTEKTIRLLEKKQYSFDVDLKSNKTEVKHWIEKFFNVEVRAMNSHRPPGKKKYAGSIVTHSVRYKRMIITLKPGYSIPLFPNE.

Belongs to the universal ribosomal protein uL23 family. As to quaternary structure, part of the 50S ribosomal subunit.

It is found in the plastid. It localises to the chloroplast. In terms of biological role, binds to 23S rRNA. This is Large ribosomal subunit protein uL23c (rpl23) from Huperzia lucidula (Shining clubmoss).